Reading from the N-terminus, the 53-residue chain is Large ribosomal subunit protein bL32 (53 aa).

Over residues M1–Y20 the composition is skewed to basic residues. Residues M1–A53 form a disordered region. The span at N42–A53 shows a compositional bias: polar residues.

The protein belongs to the bacterial ribosomal protein bL32 family.

The chain is Large ribosomal subunit protein bL32 from Sulfurovum sp. (strain NBC37-1).